A 181-amino-acid polypeptide reads, in one-letter code: MNQKAVILDEQAIRRALTRIAHEMIERNKGMNDCILVGIKTRGIYLAKRLAERIEQIEGNPVTVGEIDITLYRDDLTKKTSNEEPLVKGADIPADITDQKVIVVDDVLYTGRTVRAAMDALVDVGRPSSIQLAVLVDRGHRELPIRADYIGKNIPTSKAEKVMVQLSEVDQTDMVAIYENE.

A PRPP-binding motif is present at residues 101–113 (VIVVDDVLYTGRT).

This sequence belongs to the purine/pyrimidine phosphoribosyltransferase family. PyrR subfamily. Homodimer and homohexamer; in equilibrium.

It carries out the reaction UMP + diphosphate = 5-phospho-alpha-D-ribose 1-diphosphate + uracil. Its function is as follows. Regulates transcriptional attenuation of the pyrimidine nucleotide (pyr) operon by binding in a uridine-dependent manner to specific sites on pyr mRNA. This disrupts an antiterminator hairpin in the RNA and favors formation of a downstream transcription terminator, leading to a reduced expression of downstream genes. Also displays a weak uracil phosphoribosyltransferase activity which is not physiologically significant. In Bacillus velezensis (strain DSM 23117 / BGSC 10A6 / LMG 26770 / FZB42) (Bacillus amyloliquefaciens subsp. plantarum), this protein is Bifunctional protein PyrR.